The primary structure comprises 315 residues: Gamma-hemolysin component C (315 aa).

A signal peptide spans 1–29 (MLKNKILATTLSVSLLAPLANPLLENAKA).

This sequence belongs to the aerolysin family. In terms of assembly, toxicity requires sequential binding and synergistic association of a class S and a class F component which form heterooligomeric complexes. HlgC (class S) associates with HlgB (class F) thus forming an CB toxin.

Its function is as follows. Toxin that seems to act by forming pores in the membrane of the cell. Has a hemolytic and a leucotoxic activity. The polypeptide is Gamma-hemolysin component C (hlgC) (Staphylococcus aureus (strain Mu50 / ATCC 700699)).